Consider the following 213-residue polypeptide: MISHLLPTTSLTIHMPSIILYPIYFDKSRPRRFRCVPKDKAILNPLAKNIADVVRDLGYKCKLEPLKTHPADWVNPGRVEMVLPEKIQKKYVINEIAKVLLLRPTVKTDPLSLPIQNVPARLPENPPAYPKGVLGNTILPLHSPALSGGGISENMFQEMMQEMQKQPGLAGGMNPMAALAGMGGPAPPMPTPQASSSQRKQKSIEPEYDLDLE.

The segment at 176 to 213 is disordered; the sequence is MAALAGMGGPAPPMPTPQASSSQRKQKSIEPEYDLDLE.

The protein belongs to the SRP19 family. In terms of assembly, fungal signal recognition particle consists of a 7S RNA molecule (scR1) and at least six protein subunits: srp72, srp68, srp54, sec65, srp21 and srp14.

The protein localises to the cytoplasm. It is found in the nucleus. Signal-recognition-particle assembly has a crucial role in targeting secretory proteins to the rough endoplasmic reticulum membrane. It must be involved intimately in the translocation of a wide variety of protein substrates. In Schizosaccharomyces pombe (strain 972 / ATCC 24843) (Fission yeast), this protein is Signal recognition particle sec65 subunit (sec65).